Consider the following 215-residue polypeptide: Probable phosphoglycerate mutase GpmB (215 aa).

Substrate contacts are provided by residues 8 to 15 (RHGETQWN), 21 to 22 (QG), arginine 58, arginine 60, 82 to 85 (ELDM), 104 to 105 (RR), and 151 to 152 (GI). Histidine 9 (tele-phosphohistidine intermediate) is an active-site residue. The active-site Proton donor/acceptor is the glutamate 82.

Belongs to the phosphoglycerate mutase family. GpmB subfamily.

The enzyme catalyses (2R)-2-phosphoglycerate = (2R)-3-phosphoglycerate. The protein operates within carbohydrate degradation; glycolysis; pyruvate from D-glyceraldehyde 3-phosphate: step 3/5. This chain is Probable phosphoglycerate mutase GpmB, found in Klebsiella pneumoniae subsp. pneumoniae (strain ATCC 700721 / MGH 78578).